Here is a 529-residue protein sequence, read N- to C-terminus: Delayed-rectifier potassium channel regulatory subunit KCNS1 (529 aa).

Over 1–217 the chain is Cytoplasmic; it reads MLMLLVRGTH…LTMENPGYSL (217 aa). A helical transmembrane segment spans residues 218–239; sequence PSKLFSCVSISVVLASIAAMCI. Residues 240-270 are Extracellular-facing; it reads HSLPEYQAREAAAAVAAVAAGRSPEGVRDDP. The helical transmembrane segment at 271 to 293 threads the bilayer; that stretch reads VLRRLEYFCIAWFSFEVSSRLLL. The Cytoplasmic segment spans residues 294–304; that stretch reads APSTRNFFCHP. The chain crosses the membrane as a helical span at residues 305–322; it reads LNLIDIVSVLPFYLTLLA. The Extracellular portion of the chain corresponds to 323–340; sequence GVALGDQGGTGGKELGHL. The chain crosses the membrane as a helical; Voltage-sensor span at residues 341–361; it reads GKVVQVFRLMRIFRVLKLARH. The Cytoplasmic portion of the chain corresponds to 362–376; sequence STGLRSLGATLKHSY. The helical transmembrane segment at 377–398 threads the bilayer; the sequence is REVGILLLYLAVGVSVFSGVAY. The Extracellular portion of the chain corresponds to 399–411; that stretch reads TAEKEEDVGFNTI. The helical intramembrane region spans 412–423; sequence PACWWWGTVSMT. Residues 424–429 carry the Selectivity filter motif; that stretch reads TVGYGD. Residues 424-431 lie within the membrane without spanning it; that stretch reads TVGYGDVV. Over 432-438 the chain is Extracellular; the sequence is PVTVAGK. The chain crosses the membrane as a helical span at residues 439–467; sequence LAASGCILGGILVVALPITIIFNKFSHFY. The Cytoplasmic portion of the chain corresponds to 468–529; that stretch reads RRQKALEAAV…PSEPPHPQMY (62 aa). The disordered stretch occupies residues 496–529; sequence SEASLETSRETSQEGRSADLETQAPSEPPHPQMY. Residues 502-514 show a composition bias toward basic and acidic residues; that stretch reads TSRETSQEGRSAD.

The protein belongs to the potassium channel family. S (TC 1.A.1.2) subfamily. Kv9.1/KCNS1 sub-subfamily. As to quaternary structure, heterotetramer with KCNB1. Heterotetramer with KCNB2. Does not form homomultimers.

It localises to the cell membrane. Potassium channel regulatory subunit that modulate the delayed rectifier voltage-gated potassium channel activity of KCNB1 and KCNB2 by altering their kinetics, expression levels, and shifting the half-inactivation potential to more polarized values. While it does not form functional channels on its own, it can form functional heterotetrameric channels with KCNB1 and KCNB2. Each regulatory subunit has unique regulatory properties that can lead to extensive inhibition, significant changes in kinetics, and/or substantial shifts in the voltage dependencies of the inactivation process. This chain is Delayed-rectifier potassium channel regulatory subunit KCNS1, found in Papio anubis (Olive baboon).